Here is a 461-residue protein sequence, read N- to C-terminus: Alcaligin biosynthesis enzyme (461 aa).

9-15 (VAIGIGP) lines the FAD pocket.

It belongs to the lysine N(6)-hydroxylase/L-ornithine N(5)-oxygenase family. Requires FAD as cofactor.

It participates in siderophore biosynthesis; alcaligin biosynthesis. This Bordetella bronchiseptica (strain ATCC BAA-588 / NCTC 13252 / RB50) (Alcaligenes bronchisepticus) protein is Alcaligin biosynthesis enzyme (alcA).